We begin with the raw amino-acid sequence, 52 residues long: Large ribosomal subunit protein bL33 (52 aa).

The protein belongs to the bacterial ribosomal protein bL33 family.

The sequence is that of Large ribosomal subunit protein bL33 (rpmG) from Chlamydia muridarum (strain MoPn / Nigg).